We begin with the raw amino-acid sequence, 167 residues long: MPRSQKNDNFIDKTFTIVADILLRIIPTTQREKEAFTYYRDGMSAQSEGEYAEALQNYYEAMRLEIDPYDRSYILYNIGLIHTSNGEHAKALEYYFQALERNPSLPQAFNNMAVICHYRGEQAIQQGDPEASETWFDQAAEYWKQAILLAPSNYIEAHNWLKMTGRF.

3 TPR repeats span residues 35–68 (AFTY…EIDP), 72–105 (SYIL…NPSL), and 120–153 (GEQA…APSN).

It belongs to the Ycf3 family.

The protein localises to the plastid. The protein resides in the chloroplast thylakoid membrane. In terms of biological role, essential for the assembly of the photosystem I (PSI) complex. May act as a chaperone-like factor to guide the assembly of the PSI subunits. The sequence is that of Photosystem I assembly protein Ycf3 from Marchantia polymorpha (Common liverwort).